The chain runs to 513 residues: MQLNSTEISELIKQRIAQFNVVSEAHNEGTIVSVSDGVIRIHGLADCMQGEMISLPGNRYAIALNLERDSVGAVVMGPYADLAEGMKVKCTGRILEVPVGRGLLGRVVNTLGAPIDGKGPVDNDGFSAVEAIAPGVIDRQSVDQPVQTGYKAVDSMIPIGRGQRELIIGDRQTGKTALAIDAIINQRDSGIKCIYVAIGQKASTISNVVRKLEEHGALANTIVVVATASESAALQYLAPYAGCAMGEYFRDRGEDALIIYDDLSKQAVAYRQISLLLRRPPGREAFPGDVFYLHSRLLERAARVNADYVEAYTKGEVKGKTGSLTALPIIETQAGDVSAFVPTNVISITDGQIFLESNLFNAGIRPAVNPGISVSRVGGAAQTKIMKKLSGGIRTALAQYRELAAFSQFASDLDDATRKQLDHGQKVTELLKQKQYAPMSVAQQSLVLFAAERGYLADVELAKIGSFEAALLAYVDRDHAPLMQEINQSGGYNDEIEGKLKGILDSFKATQSW.

169–176 (GDRQTGKT) is a binding site for ATP.

This sequence belongs to the ATPase alpha/beta chains family. F-type ATPases have 2 components, CF(1) - the catalytic core - and CF(0) - the membrane proton channel. CF(1) has five subunits: alpha(3), beta(3), gamma(1), delta(1), epsilon(1). CF(0) has three main subunits: a(1), b(2) and c(9-12). The alpha and beta chains form an alternating ring which encloses part of the gamma chain. CF(1) is attached to CF(0) by a central stalk formed by the gamma and epsilon chains, while a peripheral stalk is formed by the delta and b chains.

The protein resides in the cell inner membrane. It carries out the reaction ATP + H2O + 4 H(+)(in) = ADP + phosphate + 5 H(+)(out). Functionally, produces ATP from ADP in the presence of a proton gradient across the membrane. The alpha chain is a regulatory subunit. The protein is ATP synthase subunit alpha of Salmonella arizonae (strain ATCC BAA-731 / CDC346-86 / RSK2980).